Consider the following 484-residue polypeptide: Glutamyl-tRNA(Gln) amidotransferase subunit A (484 aa).

Residues Lys-77 and Ser-152 each act as charge relay system in the active site. Ser-176 functions as the Acyl-ester intermediate in the catalytic mechanism.

This sequence belongs to the amidase family. GatA subfamily. As to quaternary structure, heterotrimer of A, B and C subunits.

The enzyme catalyses L-glutamyl-tRNA(Gln) + L-glutamine + ATP + H2O = L-glutaminyl-tRNA(Gln) + L-glutamate + ADP + phosphate + H(+). Functionally, allows the formation of correctly charged Gln-tRNA(Gln) through the transamidation of misacylated Glu-tRNA(Gln) in organisms which lack glutaminyl-tRNA synthetase. The reaction takes place in the presence of glutamine and ATP through an activated gamma-phospho-Glu-tRNA(Gln). This chain is Glutamyl-tRNA(Gln) amidotransferase subunit A, found in Pseudomonas aeruginosa (strain LESB58).